Here is a 135-residue protein sequence, read N- to C-terminus: Fluoride-specific ion channel FluC 1 (135 aa).

4 helical membrane passes run 7 to 27 (LAVGSFAFFGGILRYLIGLVL), 32 to 52 (GFPYGTLCVNLIGAFCLPFLM), 65 to 85 (LALAIGTGFFGAFTTFSSFSV), and 96 to 116 (WSAFAWYVGISMVGGVLLSLL). Na(+) contacts are provided by Gly-75 and Thr-78.

The protein belongs to the fluoride channel Fluc/FEX (TC 1.A.43) family.

The protein localises to the cell membrane. The catalysed reaction is fluoride(in) = fluoride(out). With respect to regulation, na(+) is not transported, but it plays an essential structural role and its presence is essential for fluoride channel function. Functionally, fluoride-specific ion channel. Important for reducing fluoride concentration in the cell, thus reducing its toxicity. The chain is Fluoride-specific ion channel FluC 1 from Latilactobacillus sakei subsp. sakei (strain 23K) (Lactobacillus sakei subsp. sakei).